The sequence spans 105 residues: Early nodulin-93 (105 aa).

A helical membrane pass occupies residues 66 to 83 (TAQALIISTATAAAYFIV).

The protein localises to the membrane. In Glycine max (Soybean), this protein is Early nodulin-93.